The chain runs to 283 residues: tRNA pseudouridine synthase A (283 aa).

Asp-52 acts as the Nucleophile in catalysis. Residue Tyr-148 participates in substrate binding.

The protein belongs to the tRNA pseudouridine synthase TruA family. As to quaternary structure, homodimer.

The enzyme catalyses uridine(38/39/40) in tRNA = pseudouridine(38/39/40) in tRNA. Functionally, formation of pseudouridine at positions 38, 39 and 40 in the anticodon stem and loop of transfer RNAs. This Orientia tsutsugamushi (strain Ikeda) (Rickettsia tsutsugamushi) protein is tRNA pseudouridine synthase A.